Here is a 163-residue protein sequence, read N- to C-terminus: MQLYPGIIGIKVNKIGEDEIEINSEDEIENLSLKDGIAYVHNSAPLYLKGVNTKYVLPKPLKLLRLGIPTSLENAEQVQVNYLTFFDKDYVLVGFNLTDDFKEPFAILEFDEGYTKVVLKDEFSEVKPKKEKIKKAKRKKKGAKRASKKQKAKSKSARKSRRV.

Positions 128-163 (PKKEKIKKAKRKKKGAKRASKKQKAKSKSARKSRRV) are disordered. Residues 129-163 (KKEKIKKAKRKKKGAKRASKKQKAKSKSARKSRRV) are compositionally biased toward basic residues.

This is an uncharacterized protein from Sulfurisphaera tokodaii (strain DSM 16993 / JCM 10545 / NBRC 100140 / 7) (Sulfolobus tokodaii).